Consider the following 253-residue polypeptide: Large ribosomal subunit protein uL1m (253 aa).

The N-terminal 81 residues, 1–81 (MSSLIALGKR…SIALKSNRRA (81 aa)), are a transit peptide targeting the mitochondrion.

This sequence belongs to the universal ribosomal protein uL1 family. In terms of assembly, component of the mitochondrial large ribosomal subunit (mt-LSU). Mature yeast 74S mitochondrial ribosomes consist of a small (37S) and a large (54S) subunit. The 37S small subunit contains a 15S ribosomal RNA (15S mt-rRNA) and at least 32 different proteins. The 54S large subunit contains a 21S rRNA (21S mt-rRNA) and at least 45 different proteins.

It localises to the mitochondrion. In terms of biological role, component of the mitochondrial ribosome (mitoribosome), a dedicated translation machinery responsible for the synthesis of mitochondrial genome-encoded proteins, including at least some of the essential transmembrane subunits of the mitochondrial respiratory chain. The mitoribosomes are attached to the mitochondrial inner membrane and translation products are cotranslationally integrated into the membrane. This chain is Large ribosomal subunit protein uL1m (mrpl1), found in Schizosaccharomyces pombe (strain 972 / ATCC 24843) (Fission yeast).